A 362-amino-acid chain; its full sequence is Phosphoserine aminotransferase (362 aa).

Residues Ser9 and Arg42 each contribute to the L-glutamate site. Residues 76–77 (GR), Trp102, Thr153, Asp174, and Gln197 contribute to the pyridoxal 5'-phosphate site. At Lys198 the chain carries N6-(pyridoxal phosphate)lysine. Position 239 to 240 (239 to 240 (NT)) interacts with pyridoxal 5'-phosphate.

It belongs to the class-V pyridoxal-phosphate-dependent aminotransferase family. SerC subfamily. In terms of assembly, homodimer. Pyridoxal 5'-phosphate is required as a cofactor.

The protein resides in the cytoplasm. It catalyses the reaction O-phospho-L-serine + 2-oxoglutarate = 3-phosphooxypyruvate + L-glutamate. The enzyme catalyses 4-(phosphooxy)-L-threonine + 2-oxoglutarate = (R)-3-hydroxy-2-oxo-4-phosphooxybutanoate + L-glutamate. It functions in the pathway amino-acid biosynthesis; L-serine biosynthesis; L-serine from 3-phospho-D-glycerate: step 2/3. Its pathway is cofactor biosynthesis; pyridoxine 5'-phosphate biosynthesis; pyridoxine 5'-phosphate from D-erythrose 4-phosphate: step 3/5. Catalyzes the reversible conversion of 3-phosphohydroxypyruvate to phosphoserine and of 3-hydroxy-2-oxo-4-phosphonooxybutanoate to phosphohydroxythreonine. This chain is Phosphoserine aminotransferase, found in Salmonella newport (strain SL254).